Here is a 124-residue protein sequence, read N- to C-terminus: Putative C(50) carotenoid beta-cyclase subunit A (124 aa).

A run of 3 helical transmembrane segments spans residues 1 to 21 (MIGL…LVID), 34 to 54 (AAAL…VLGV), and 78 to 98 (FEEV…AAGV).

It belongs to the lycopene beta-cyclase family. May form a complex with LbtBC.

It localises to the cell membrane. Its pathway is carotenoid biosynthesis. Functionally, involved in the biosynthesis of C(50) beta-cyclic carotenoids. May have C(50) carotenoid beta-cyclase activity and produce the C(50) beta-cyclic carotenoid C.p.450 from the C(50) carotenoid dihydrobisanhydrobacterioruberin (DH-BABR). This is Putative C(50) carotenoid beta-cyclase subunit A from Dietzia sp. (strain CQ4).